The following is a 181-amino-acid chain: Negative modulator of initiation of replication (181 aa).

3 interaction with DNA regions span residues 87–88 (AV), 116–120 (RTRVY), and 150–156 (NTNTGRK).

The protein belongs to the SeqA family. In terms of assembly, homodimer. Polymerizes to form helical filaments.

Its subcellular location is the cytoplasm. In terms of biological role, negative regulator of replication initiation, which contributes to regulation of DNA replication and ensures that replication initiation occurs exactly once per chromosome per cell cycle. Binds to pairs of hemimethylated GATC sequences in the oriC region, thus preventing assembly of replication proteins and re-initiation at newly replicated origins. Repression is relieved when the region becomes fully methylated. This chain is Negative modulator of initiation of replication, found in Shigella dysenteriae serotype 1 (strain Sd197).